Reading from the N-terminus, the 275-residue chain is uncharacterized protein (275 aa).

A coiled-coil region spans residues 75-157; the sequence is AKELIKNRRL…AELKQAAEQG (83 aa).

This is an uncharacterized protein from Bacillus subtilis (strain 168).